A 90-amino-acid polypeptide reads, in one-letter code: Small ribosomal subunit protein bS16 (90 aa).

This sequence belongs to the bacterial ribosomal protein bS16 family.

This chain is Small ribosomal subunit protein bS16, found in Brevibacillus brevis (strain 47 / JCM 6285 / NBRC 100599).